Reading from the N-terminus, the 83-residue chain is Evasin P1090 (83 aa).

Residues 1–24 form the signal peptide; sequence MEVKIFAFLQIAVLIAFSLHLASA. Disulfide bonds link Cys44-Cys63, Cys48-Cys65, and Cys59-Cys76. A glycan (N-linked (GlcNAc...) asparagine) is linked at Asn47. An N-linked (GlcNAc...) asparagine glycan is attached at Asn70.

It is found in the secreted. Its function is as follows. Salivary chemokine-binding protein which binds to host chemokines CXCL1, CXCL2, CXCL3, CXCL5, CXCL6, CXCL10, CXCL11 and CXCL13. This chain is Evasin P1090, found in Ixodes ricinus (Common tick).